The sequence spans 248 residues: Metallo-beta-lactamase type 2 (248 aa).

The signal sequence occupies residues 1 to 21 (MKGLKGLLVLALGFTGLQVFG). The Zn(2+) site is built by His-97, His-99, Asp-101, His-160, and Cys-179. Lys-182 contacts substrate. Zn(2+) is bound at residue His-221.

This sequence belongs to the metallo-beta-lactamase superfamily. Class-B beta-lactamase family. Monomer. Zn(2+) serves as cofactor.

Its subcellular location is the periplasm. The enzyme catalyses a beta-lactam + H2O = a substituted beta-amino acid. In terms of biological role, confers resistance to the different beta-lactams antibiotics (penicillin, cephalosporin and carbapenem) via the hydrolysis of the beta-lactam ring. This Elizabethkingia meningoseptica (Chryseobacterium meningosepticum) protein is Metallo-beta-lactamase type 2 (blaB7).